The following is a 162-amino-acid chain: Cytochrome c-type biogenesis protein CcmE (162 aa).

Over 1–8 (MNPRRKKR) the chain is Cytoplasmic. A helical; Signal-anchor for type II membrane protein transmembrane segment spans residues 9-29 (LALVVGLIGGVAAVASLLLYA). The Periplasmic segment spans residues 30–162 (LNTNLNLFYT…YTETQKGGSR (133 aa)). The heme site is built by histidine 131 and tyrosine 135.

Belongs to the CcmE/CycJ family.

It is found in the cell inner membrane. Heme chaperone required for the biogenesis of c-type cytochromes. Transiently binds heme delivered by CcmC and transfers the heme to apo-cytochromes in a process facilitated by CcmF and CcmH. In Shewanella amazonensis (strain ATCC BAA-1098 / SB2B), this protein is Cytochrome c-type biogenesis protein CcmE.